A 376-amino-acid chain; its full sequence is Oligopeptide transport system permease protein OppC (376 aa).

Transmembrane regions (helical) follow at residues Trp46–Leu66, Tyr149–Met169, Leu173–Ile193, Ile209–Phe229, Val242–Ile262, Leu297–Phe317, and Ile341–Phe361. In terms of domain architecture, ABC transmembrane type-1 spans Met169–Ala362.

It belongs to the binding-protein-dependent transport system permease family. OppBC subfamily. In terms of assembly, the complex is composed of two ATP-binding proteins (OppD and OppF), two transmembrane proteins (OppB and OppC) and a solute-binding protein (OppA).

The protein resides in the cell membrane. Functionally, part of the ABC transporter complex OppABCDF involved in the uptake of oligopeptides. Probably responsible for the translocation of the substrate across the membrane. The protein is Oligopeptide transport system permease protein OppC (oppC) of Mycoplasma pneumoniae (strain ATCC 29342 / M129 / Subtype 1) (Mycoplasmoides pneumoniae).